The primary structure comprises 208 residues: Small ribosomal subunit protein uS5 (208 aa).

The region spanning 48–111 is the S5 DRBM domain; it reads LEDEVLDINM…DAAKLDITYI (64 aa).

The protein belongs to the universal ribosomal protein uS5 family. Part of the 30S ribosomal subunit. Contacts protein S4.

With S4 and S12 plays an important role in translational accuracy. The polypeptide is Small ribosomal subunit protein uS5 (Methanosarcina barkeri (strain Fusaro / DSM 804)).